Here is an 827-residue protein sequence, read N- to C-terminus: Villin-1 (827 aa).

Residues 1–126 (MTKLNAQVKG…IRKGGVASGM (126 aa)) are necessary for homodimerization. Residues 1–734 (MTKLNAQVKG…YEDLKAELGN (734 aa)) are core. One copy of the Gelsolin-like 1 repeat lies at 28–107 (QMVPVSSSTY…EVQGNESEAF (80 aa)). LPA/PIP2-binding site stretches follow at residues 112–119 (KQGIVIRK) and 138–146 (RLLHVKGKR). Gelsolin-like repeat units follow at residues 148–216 (VVAG…GEDE) and 269–342 (EVAT…SAVF). Position 366 is a phosphoserine (Ser-366). Gelsolin-like repeat units follow at residues 409-489 (DLVP…PHLM), 528-595 (TKAF…ANFW), and 634-707 (TEIP…PPTF). Ser-735 is subject to Phosphoserine. The 67-residue stretch at 761–827 (SGPLPIFPLE…QNLKKEKGLF (67 aa)) folds into the HP domain. The interval 816–824 (KQQNLKKEK) is LPA/PIP2-binding site 3.

The protein belongs to the villin/gelsolin family. As to quaternary structure, monomer. Homodimer; homodimerization is necessary for actin-bundling. Associates with F-actin; phosphorylation at tyrosine residues decreases the association with F-actin. Interacts (phosphorylated at C-terminus tyrosine phosphorylation sites) with PLCG1 (via the SH2 domains). Interacts (phosphorylated form) with PLCG1; the interaction is enhanced by hepatocyte growth factor (HGF). In terms of processing, phosphorylated on tyrosine residues by SRC. The unphosphorylated form increases the initial rate of actin-nucleating activity, whereas the tyrosine-phosphorylated form inhibits actin-nucleating activity, enhances actin-bundling activity and enhances actin-severing activity by reducing high Ca(2+) requirements. The tyrosine-phosphorylated form does not regulate actin-capping activity. Tyrosine phosphorylation is essential for cell migration: tyrosine phosphorylation sites in the N-terminus half regulate actin reorganization and cell morphology, whereas tyrosine phosphorylation sites in the C-terminus half regulate cell migration. Tyrosine phosphorylation is induced by epidermal growth factor (EGF) and stimulates cell migration.

It is found in the cytoplasm. It localises to the cytoskeleton. Its subcellular location is the cell projection. The protein resides in the lamellipodium. The protein localises to the ruffle. It is found in the microvillus. It localises to the filopodium tip. Its subcellular location is the filopodium. In terms of biological role, epithelial cell-specific Ca(2+)-regulated actin-modifying protein that modulates the reorganization of microvillar actin filaments. Plays a role in the actin nucleation, actin filament bundle assembly, actin filament capping and severing. Binds phosphatidylinositol 4,5-bisphosphate (PIP2) and lysophosphatidic acid (LPA); binds LPA with higher affinity than PIP2. Binding to LPA increases its phosphorylation by SRC and inhibits all actin-modifying activities. Binding to PIP2 inhibits actin-capping and -severing activities but enhances actin-bundling activity. Regulates the intestinal epithelial cell morphology, cell invasion, cell migration and apoptosis. Protects against apoptosis induced by dextran sodium sulfate (DSS) in the gastrointestinal epithelium. Appears to regulate cell death by maintaining mitochondrial integrity. Enhances hepatocyte growth factor (HGF)-induced epithelial cell motility, chemotaxis and wound repair. In Sus scrofa (Pig), this protein is Villin-1 (VIL1).